A 1357-amino-acid chain; its full sequence is DNA-directed RNA polymerase subunit beta (1357 aa).

Belongs to the RNA polymerase beta chain family. The RNAP catalytic core consists of 2 alpha, 1 beta, 1 beta' and 1 omega subunit. When a sigma factor is associated with the core the holoenzyme is formed, which can initiate transcription.

The catalysed reaction is RNA(n) + a ribonucleoside 5'-triphosphate = RNA(n+1) + diphosphate. Functionally, DNA-dependent RNA polymerase catalyzes the transcription of DNA into RNA using the four ribonucleoside triphosphates as substrates. This Pseudomonas putida (Arthrobacter siderocapsulatus) protein is DNA-directed RNA polymerase subunit beta.